A 142-amino-acid polypeptide reads, in one-letter code: Hemoglobin subunit alpha-1/2 (142 aa).

In terms of domain architecture, Globin spans Val2 to Arg142. Residue Ser4 is modified to Phosphoserine. Lys8 carries the post-translational modification N6-succinyllysine. The residue at position 9 (Thr9) is a Phosphothreonine. Position 12 is an N6-succinyllysine (Lys12). At Lys17 the chain carries N6-acetyllysine; alternate. Residue Lys17 is modified to N6-succinyllysine; alternate. Phosphotyrosine is present on Tyr25. Lys41 bears the N6-succinyllysine mark. His59 contacts O2. His88 provides a ligand contact to heme b. Ser103 carries the phosphoserine modification. Thr109 carries the post-translational modification Phosphothreonine. Ser125 carries the phosphoserine modification. Phosphothreonine occurs at positions 135 and 138. Ser139 bears the Phosphoserine mark.

The protein belongs to the globin family. As to quaternary structure, heterotetramer of two alpha chains and two beta chains. As to expression, red blood cells.

In terms of biological role, involved in oxygen transport from the lung to the various peripheral tissues. The polypeptide is Hemoglobin subunit alpha-1/2 (Oryctolagus cuniculus (Rabbit)).